Consider the following 231-residue polypeptide: Regulatory protein VanRc (231 aa).

The Response regulatory domain occupies 4–117 (KIVVVDDEKE…EVVARVKTQL (114 aa)). Aspartate 53 is modified (4-aspartylphosphate). Positions 132 to 231 (VEEYEKDGLI…VWGVGYIIEK (100 aa)) form a DNA-binding region, ompR/PhoB-type.

Post-translationally, phosphorylated by VanSc.

It is found in the cytoplasm. Its function is as follows. Member of the two-component regulatory system VanSc/VanRc. Binds to the promoter regions of target genes. Activates the transcription of vanC1 and vanXYC in response to vancomycin which results in vancomycin resistance. This is Regulatory protein VanRc from Enterococcus gallinarum.